The sequence spans 241 residues: LexA repressor (241 aa).

Positions 41 to 61 (FREIGNAAGLKSPSSVKHQLQ) form a DNA-binding region, H-T-H motif. Active-site for autocatalytic cleavage activity residues include Ser165 and Lys202.

This sequence belongs to the peptidase S24 family. Homodimer.

It carries out the reaction Hydrolysis of Ala-|-Gly bond in repressor LexA.. Functionally, represses a number of genes involved in the response to DNA damage (SOS response), including recA and lexA. In the presence of single-stranded DNA, RecA interacts with LexA causing an autocatalytic cleavage which disrupts the DNA-binding part of LexA, leading to derepression of the SOS regulon and eventually DNA repair. The sequence is that of LexA repressor from Bifidobacterium longum subsp. infantis (strain ATCC 15697 / DSM 20088 / JCM 1222 / NCTC 11817 / S12).